A 549-amino-acid chain; its full sequence is Probable protein kinase UbiB (549 aa).

Residues 123-501 (DFNETPLASA…QQQAHKSNYL (379 aa)) enclose the Protein kinase domain. ATP contacts are provided by residues 129-137 (LASASISQV) and K152. The Proton acceptor role is filled by D287. The next 2 helical transmembrane spans lie at 498-518 (SNYL…LFNQ) and 520-540 (ATLL…IIGW).

Belongs to the ABC1 family. UbiB subfamily.

The protein resides in the cell inner membrane. It participates in cofactor biosynthesis; ubiquinone biosynthesis [regulation]. Its function is as follows. Is probably a protein kinase regulator of UbiI activity which is involved in aerobic coenzyme Q (ubiquinone) biosynthesis. This Shewanella oneidensis (strain ATCC 700550 / JCM 31522 / CIP 106686 / LMG 19005 / NCIMB 14063 / MR-1) protein is Probable protein kinase UbiB.